Consider the following 279-residue polypeptide: Osmoprotective compounds uptake permease protein GgtC (279 aa).

Transmembrane regions (helical) follow at residues 7–27, 58–78, 90–110, 120–140, 146–166, 202–222, and 247–267; these read LLFLSAYLILPTLETVYLSFF, LWLVLVTGISVSLGLIIAVLV, IIFLPMAISFVGASVIWKFVY, IGLLNAIVTSLGFAPVGWLVE, FALIAIMIWLYTGFCMVILSA, LLVVSTTMVILVLKVFDIVFV, and FGRGSTIAVILLLLIVPVMIT. Residues 53-270 enclose the ABC transmembrane type-1 domain; the sequence is FRNNLLWLVL…IVPVMITNIR (218 aa).

The protein belongs to the binding-protein-dependent transport system permease family. The complex is composed of two ATP-binding proteins (GgtA), two transmembrane proteins (GgtC and GgtD) and a solute-binding protein (GgtB).

It localises to the cell membrane. Its function is as follows. Part of the ABC transporter complex GgtABCD involved in the uptake of the osmoprotective compounds glucosylglycerol (GG), sucrose and trehalose. Responsible for the translocation of the substrate across the membrane. The polypeptide is Osmoprotective compounds uptake permease protein GgtC (Synechocystis sp. (strain ATCC 27184 / PCC 6803 / Kazusa)).